The primary structure comprises 365 residues: Histidinol-phosphate aminotransferase 2 (365 aa).

At lysine 222 the chain carries N6-(pyridoxal phosphate)lysine.

Belongs to the class-II pyridoxal-phosphate-dependent aminotransferase family. Histidinol-phosphate aminotransferase subfamily. As to quaternary structure, homodimer. Pyridoxal 5'-phosphate is required as a cofactor.

The enzyme catalyses L-histidinol phosphate + 2-oxoglutarate = 3-(imidazol-4-yl)-2-oxopropyl phosphate + L-glutamate. The protein operates within amino-acid biosynthesis; L-histidine biosynthesis; L-histidine from 5-phospho-alpha-D-ribose 1-diphosphate: step 7/9. This Bordetella parapertussis (strain 12822 / ATCC BAA-587 / NCTC 13253) protein is Histidinol-phosphate aminotransferase 2 (hisC2).